The following is a 235-amino-acid chain: Myb family transcription factor PHL12 (235 aa).

Residues 1-12 (MMQSREEIRDDS) are compositionally biased toward basic and acidic residues. A disordered region spans residues 1-20 (MMQSREEIRDDSSSGLVLTT). In terms of domain architecture, HTH myb-type spans 20 to 80 (TDPKPRLRWT…HLQKFRLGKQ (61 aa)). Positions 51–76 (PKTIMRVMGVKGLTLYHLKSHLQKFR) form a DNA-binding region, H-T-H motif. The segment at 119 to 139 (RNMNEMQMEVQRRIEEEVVIE) is coiled coil.

It belongs to the MYB-CC family. As to expression, expressed in phloem and/or cambium.

Its subcellular location is the nucleus. In Arabidopsis thaliana (Mouse-ear cress), this protein is Myb family transcription factor PHL12.